We begin with the raw amino-acid sequence, 334 residues long: Chitin synthase export chaperone (334 aa).

Helical transmembrane passes span 49–69 (IIFEGAASVMHIVALIMTVIM), 85–105 (ILSFFYLYMLLTAMSLIIDAG), 123–143 (GLSSAVITCLLINGFVGFQLY), 159–179 (LAAFAISFLVSLATFKSWAGL), 185–205 (VGLFVVLYLLNAVQLFVYVAM), 220–240 (LGDIAFGIFFFVAGQVLLYAF), and 244–264 (ICIAISHYLDGLFLATVCNLL).

Belongs to the CHS7 family.

It is found in the endoplasmic reticulum membrane. Functionally, chaperone required for the export of the chitin synthase chs3 from the endoplasmic reticulum. Plays a critical role in cell wall integrity and virulence. This Fusarium oxysporum f. sp. lycopersici (strain 4287 / CBS 123668 / FGSC 9935 / NRRL 34936) (Fusarium vascular wilt of tomato) protein is Chitin synthase export chaperone.